Consider the following 514-residue polypeptide: Ribonuclease Y (514 aa).

Residues 3–23 traverse the membrane as a helical segment; sequence YMIIYEIIAGILIVVAILIHF. A KH domain is found at 204–289; sequence TVHVVTLPND…EMVEKAEKEL (86 aa). Residues 330–423 form the HD domain; it reads VLKHSVEVAY…VQAADAISAA (94 aa).

Belongs to the RNase Y family.

It is found in the cell membrane. Its function is as follows. Endoribonuclease that initiates mRNA decay. In Clostridium kluyveri (strain ATCC 8527 / DSM 555 / NBRC 12016 / NCIMB 10680 / K1), this protein is Ribonuclease Y.